A 212-amino-acid chain; its full sequence is Urease accessory protein UreG (212 aa).

A GTP-binding site is contributed by 11–18 (GPVGSGKT).

This sequence belongs to the SIMIBI class G3E GTPase family. UreG subfamily. Homodimer. UreD, UreF and UreG form a complex that acts as a GTP-hydrolysis-dependent molecular chaperone, activating the urease apoprotein by helping to assemble the nickel containing metallocenter of UreC. The UreE protein probably delivers the nickel.

It is found in the cytoplasm. In terms of biological role, facilitates the functional incorporation of the urease nickel metallocenter. This process requires GTP hydrolysis, probably effectuated by UreG. The protein is Urease accessory protein UreG of Trichodesmium erythraeum (strain IMS101).